Reading from the N-terminus, the 309-residue chain is Zinc transporter ZIP2 (309 aa).

Residues 1 to 8 (MEQLLGIK) lie on the Extracellular side of the membrane. Residues 9–29 (LGCLFALLALTLGCGLTPICF) traverse the membrane as a helical segment. Residues 30–46 (KWFQIDAARGHHRLVLR) are Cytoplasmic-facing. A helical membrane pass occupies residues 47–67 (LLGCISAGVFLGAGFMHMTAE). Residues 68–103 (ALEEIESQIQKFMVQNRSASERNSSGDADSAHMEYP) are Extracellular-facing. Residues 104 to 124 (YGELIISLGFFFVFFLESLAL) form a helical membrane-spanning segment. Over 125–164 (QCCPGAAGGSTVQDEEWGGAHIFELHSHGHLPSPSKGPLR) the chain is Cytoplasmic. A helical transmembrane segment spans residues 165–185 (ALVLLLSLSFHSVFEGLAVGL). Zn(2+)-binding residues include H175 and E179. Over 186–189 (QPTV) the chain is Extracellular. The chain crosses the membrane as a helical span at residues 190 to 210 (AATVQLCLAVLAHKGLVVFGV). Zn(2+) is bound at residue H202. The Cytoplasmic segment spans residues 211–224 (GMRLVHLGTSSRWA). Residues 225-245 (VFSILLLALMSPLGLAVGLAV) form a helical membrane-spanning segment. The Extracellular segment spans residues 246–258 (TGGDSEGGRGLAQ). Residues 259–279 (AVLEGVAAGTFLYVTFLEILP) form a helical membrane-spanning segment. E276 contributes to the Zn(2+) binding site. At 280–288 (RELASPEAP) the chain is on the cytoplasmic side. The helical transmembrane segment at 289-309 (LAKWSCVAAGFAFMAFIALWA) threads the bilayer.

Belongs to the ZIP transporter (TC 2.A.5) family. As to expression, expressed only in prostate and uterine epithelial cells.

The protein resides in the cell membrane. The enzyme catalyses Zn(2+)(in) = Zn(2+)(out). It carries out the reaction Cd(2+)(in) = Cd(2+)(out). Activity is increased at acidic pH (6.5). Inhibited in the presence of high extracellular K(+). In terms of biological role, transporter for the divalent cation Zn(2+). Mediates the influx of Zn(2+) into cells from extracellular space. The Zn(2+) uniporter activity is independent of H(+)-driving force, but is modulated by extracellular pH and membrane potential. Also transports other divalent cations Zn(2+), Cd2(+), Cu2(+), Co2(+) in the order of decreasing affinity, respectively. In the skin, aids in the differentiation of keratinocytes in the epidermis. The polypeptide is Zinc transporter ZIP2 (Homo sapiens (Human)).